The primary structure comprises 388 residues: 2-Hydroxyacid oxidase (388 aa).

A disordered region spans residues 1–21 (MENQFKNNNNSSSIETSNQFS). The FMN hydroxy acid dehydrogenase domain maps to 26 to 384 (NRLDSFVSVS…NNSIIWDQNK (359 aa)). Tyr-52 is a glyoxylate binding site. FMN contacts are provided by residues 105–107 (PWA), Ser-134, 156–158 (QLY), and Thr-184. Tyr-158 contacts glyoxylate. Arg-193 contributes to the glyoxylate binding site. Lys-255 and Ser-277 together coordinate FMN. Residues His-279 and Arg-282 each contribute to the glyoxylate site. His-279 (proton acceptor) is an active-site residue. FMN-binding positions include 310 to 314 (DGGIR) and 333 to 334 (GR).

The protein belongs to the FMN-dependent alpha-hydroxy acid dehydrogenase family. Homotetramer. The cofactor is FMN.

It catalyses the reaction glycolate + O2 = glyoxylate + H2O2. The catalysed reaction is a (2S)-2-hydroxycarboxylate + O2 = a 2-oxocarboxylate + H2O2. In terms of biological role, catalyzes the oxidation of glycolate to glyoxylate, with a reduction of O2 to H2O2. May use other 2-hydroxyacids as substrates. In Dictyostelium discoideum (Social amoeba), this protein is 2-Hydroxyacid oxidase (haox).